The chain runs to 229 residues: Cytidylate kinase (229 aa).

12–20 (GPSGSGKGT) lines the ATP pocket.

Belongs to the cytidylate kinase family. Type 1 subfamily.

The protein resides in the cytoplasm. It catalyses the reaction CMP + ATP = CDP + ADP. The catalysed reaction is dCMP + ATP = dCDP + ADP. In Pseudomonas fluorescens (strain SBW25), this protein is Cytidylate kinase.